A 365-amino-acid chain; its full sequence is Phospho-N-acetylmuramoyl-pentapeptide-transferase (365 aa).

10 helical membrane passes run 29 to 49 (VGGL…IIVW), 73 to 93 (GTPT…VIIW), 97 to 117 (SNIY…LGLV), 133 to 153 (ILNK…IMFI), 171 to 191 (IVCK…VGTS), 202 to 222 (GLVI…TWVV), 242 to 262 (LVVV…FNSY), 266 to 286 (IFMG…VSIL), 291 to 311 (YLLL…IFQV), and 341 to 361 (IVVR…VIFI).

This sequence belongs to the glycosyltransferase 4 family. MraY subfamily. Mg(2+) is required as a cofactor.

The protein resides in the cell inner membrane. The enzyme catalyses UDP-N-acetyl-alpha-D-muramoyl-L-alanyl-gamma-D-glutamyl-meso-2,6-diaminopimeloyl-D-alanyl-D-alanine + di-trans,octa-cis-undecaprenyl phosphate = di-trans,octa-cis-undecaprenyl diphospho-N-acetyl-alpha-D-muramoyl-L-alanyl-D-glutamyl-meso-2,6-diaminopimeloyl-D-alanyl-D-alanine + UMP. Its pathway is cell wall biogenesis; peptidoglycan biosynthesis. Functionally, catalyzes the initial step of the lipid cycle reactions in the biosynthesis of the cell wall peptidoglycan: transfers peptidoglycan precursor phospho-MurNAc-pentapeptide from UDP-MurNAc-pentapeptide onto the lipid carrier undecaprenyl phosphate, yielding undecaprenyl-pyrophosphoryl-MurNAc-pentapeptide, known as lipid I. This chain is Phospho-N-acetylmuramoyl-pentapeptide-transferase, found in Blochmanniella floridana.